The following is a 1290-amino-acid chain: Period circadian protein homolog 1 (1290 aa).

Residues 1-134 form a disordered region; it reads MSGPLEGADG…SSEQSARART (134 aa). Positions 1–151 are interaction with BTRC; sequence MSGPLEGADG…LRELKLRLPP (151 aa). A compositionally biased stretch (pro residues) spans 25–38; it reads VPSPGPPQHRPCPG. Composition is skewed to low complexity over residues 48–57 and 64–115; these read NSNGSSGNES and GASQ…ASSE. The segment covering 116 to 132 has biased composition (polar residues); sequence QDNPSTSGCSSEQSARA. Thr-121 is subject to Phosphothreonine; by CSNK1E. Residues Ser-122 and Ser-126 each carry the phosphoserine; by CSNK1E modification. The Nuclear export signal 1 motif lies at 138 to 147; that stretch reads LMTALRELKL. PAS domains follow at residues 208–275 and 348–414; these read ITSE…PSRL and YEAP…KILQ. The region spanning 422-465 is the PAC domain; it reads HSPIRFCARNGEYVTMDTSWAGFVHPWSRKVAFVLGRHKVRTAP. A Nuclear export signal 2 motif is present at residues 489–498; that stretch reads LSEQIHRLLL. 2 disordered regions span residues 508–544 and 646–698; these read GLCG…PAPV and TTKR…KEPV. 2 stretches are compositionally biased toward low complexity: residues 517-533 and 652-662; these read SPGP…SNGG and ASSSSYTTSSA. The required for phosphorylation by CSNK1E stretch occupies residues 596–815; sequence ELEAGSAPVQ…GLDSSSTAPS (220 aa). 3 positions are modified to phosphoserine: Ser-661, Ser-663, and Ser-704. Disordered regions lie at residues 749–772, 805–874, and 938–977; these read GLAP…APDA, RGLD…PPAT, and ALQT…FNSR. The span at 751-769 shows a compositional bias: pro residues; the sequence is APGPAPSPAPSPTVAPDPA. The residue at position 815 (Ser-815) is a Phosphoserine. The Nuclear localization signal motif lies at 827 to 843; sequence APPSRRHHCRSKAKRSR. A compositionally biased stretch (basic residues) spans 830–847; sequence SRRHHCRSKAKRSRHHQN. The segment covering 860 to 874 has biased composition (pro residues); it reads SPVPPSTPWPTPPAT. A compositionally biased stretch (low complexity) spans 950–961; sequence ASHSPSPSLPAL. A phosphoserine mark is found at Ser-979 and Ser-980. The Nuclear export signal 3 signature appears at 982-989; sequence LQLNLLQL. Residues 996–1037 are disordered; sequence EGAAVAGGPGSSAGPPPPSAEAAEPEARLAEVTESSNQDALS. The LXXLL signature appears at 1043-1047; the sequence is LELLL. The segment covering 1051–1062 has biased composition (low complexity); sequence SRSGTGSAASGS. 2 disordered regions span residues 1051–1098 and 1207–1290; these read SRSG…SKYF and SSTQ…NCTS. Positions 1063 to 1077 are enriched in gly residues; the sequence is LGSGLGSGSGSGSHE. The segment covering 1078-1095 has biased composition (low complexity); it reads GGSTSASITRSSQSSHTS. The CRY binding domain stretch occupies residues 1149 to 1290; the sequence is SRDMTSVLKQ…ALPTAGNCTS (142 aa). The segment covering 1236–1248 has biased composition (gly residues); that stretch reads GEQGSSGGGSGEG.

Homodimer. Component of the circadian core oscillator, which includes the CRY proteins, CLOCK or NPAS2, BMAL1 or BMAL2, CSNK1D and/or CSNK1E, TIMELESS, and the PER proteins. Interacts directly with TIMELESS, PER2, PER3, CRY1 and CRY2. Interacts with BMAL1 and CLOCK. Interacts with GPRASP1. Interacts (phosphorylated) with BTRC and FBXW11; the interactions trigger proteasomal degradation. Interacts with NONO, WDR5 and SFPQ. Interacts with USP2. Interacts with HNF4A. Post-translationally, phosphorylated on serine residues by CSNK1D, CSNK1E and probably also by CSNK1G2. Phosphorylation by CSNK1D or CSNK1E promotes nuclear location of PER proteins as well as ubiquitination and subsequent degradation. May be dephosphorylated by PP1. In terms of processing, ubiquitinated; requires phosphorylation by CSNK1E and interaction with BTRC and FBXW11. Deubiquitinated by USP2. Widely expressed. Expressed in hair follicles (at protein level). Found in heart, brain, placenta, lung, liver, skeletal muscle, pancreas, kidney, spleen, thymus, prostate, testis, ovary and small intestine. Highest level in skeletal muscle.

The protein resides in the nucleus. The protein localises to the cytoplasm. In terms of biological role, transcriptional repressor which forms a core component of the circadian clock. The circadian clock, an internal time-keeping system, regulates various physiological processes through the generation of approximately 24 hour circadian rhythms in gene expression, which are translated into rhythms in metabolism and behavior. It is derived from the Latin roots 'circa' (about) and 'diem' (day) and acts as an important regulator of a wide array of physiological functions including metabolism, sleep, body temperature, blood pressure, endocrine, immune, cardiovascular, and renal function. Consists of two major components: the central clock, residing in the suprachiasmatic nucleus (SCN) of the brain, and the peripheral clocks that are present in nearly every tissue and organ system. Both the central and peripheral clocks can be reset by environmental cues, also known as Zeitgebers (German for 'timegivers'). The predominant Zeitgeber for the central clock is light, which is sensed by retina and signals directly to the SCN. The central clock entrains the peripheral clocks through neuronal and hormonal signals, body temperature and feeding-related cues, aligning all clocks with the external light/dark cycle. Circadian rhythms allow an organism to achieve temporal homeostasis with its environment at the molecular level by regulating gene expression to create a peak of protein expression once every 24 hours to control when a particular physiological process is most active with respect to the solar day. Transcription and translation of core clock components (CLOCK, NPAS2, BMAL1, BMAL2, PER1, PER2, PER3, CRY1 and CRY2) plays a critical role in rhythm generation, whereas delays imposed by post-translational modifications (PTMs) are important for determining the period (tau) of the rhythms (tau refers to the period of a rhythm and is the length, in time, of one complete cycle). A diurnal rhythm is synchronized with the day/night cycle, while the ultradian and infradian rhythms have a period shorter and longer than 24 hours, respectively. Disruptions in the circadian rhythms contribute to the pathology of cardiovascular diseases, cancer, metabolic syndromes and aging. A transcription/translation feedback loop (TTFL) forms the core of the molecular circadian clock mechanism. Transcription factors, CLOCK or NPAS2 and BMAL1 or BMAL2, form the positive limb of the feedback loop, act in the form of a heterodimer and activate the transcription of core clock genes and clock-controlled genes (involved in key metabolic processes), harboring E-box elements (5'-CACGTG-3') within their promoters. The core clock genes: PER1/2/3 and CRY1/2 which are transcriptional repressors form the negative limb of the feedback loop and interact with the CLOCK|NPAS2-BMAL1|BMAL2 heterodimer inhibiting its activity and thereby negatively regulating their own expression. This heterodimer also activates nuclear receptors NR1D1/2 and RORA/B/G, which form a second feedback loop and which activate and repress BMAL1 transcription, respectively. Regulates circadian target genes expression at post-transcriptional levels, but may not be required for the repression at transcriptional level. Controls PER2 protein decay. Represses CRY2 preventing its repression on CLOCK/BMAL1 target genes such as FXYD5 and SCNN1A in kidney and PPARA in liver. Besides its involvement in the maintenance of the circadian clock, has an important function in the regulation of several processes. Participates in the repression of glucocorticoid receptor NR3C1/GR-induced transcriptional activity by reducing the association of NR3C1/GR to glucocorticoid response elements (GREs) by BMAL1:CLOCK. Plays a role in the modulation of the neuroinflammatory state via the regulation of inflammatory mediators release, such as CCL2 and IL6. In spinal astrocytes, negatively regulates the MAPK14/p38 and MAPK8/JNK MAPK cascades as well as the subsequent activation of NFkappaB. Coordinately regulates the expression of multiple genes that are involved in the regulation of renal sodium reabsorption. Can act as gene expression activator in a gene and tissue specific manner, in kidney enhances WNK1 and SLC12A3 expression in collaboration with CLOCK. Modulates hair follicle cycling. Represses the CLOCK-BMAL1 induced transcription of BHLHE40/DEC1. This chain is Period circadian protein homolog 1 (PER1), found in Homo sapiens (Human).